Here is a 209-residue protein sequence, read N- to C-terminus: Uracil phosphoribosyltransferase (209 aa).

5-phospho-alpha-D-ribose 1-diphosphate is bound by residues arginine 79, arginine 104, and 131–139; that span reads DPMLATGNS. Uracil is bound by residues isoleucine 194 and 199-201; that span reads GDA. Aspartate 200 is a binding site for 5-phospho-alpha-D-ribose 1-diphosphate.

It belongs to the UPRTase family. Mg(2+) serves as cofactor.

The catalysed reaction is UMP + diphosphate = 5-phospho-alpha-D-ribose 1-diphosphate + uracil. It functions in the pathway pyrimidine metabolism; UMP biosynthesis via salvage pathway; UMP from uracil: step 1/1. With respect to regulation, allosterically activated by GTP. Catalyzes the conversion of uracil and 5-phospho-alpha-D-ribose 1-diphosphate (PRPP) to UMP and diphosphate. The chain is Uracil phosphoribosyltransferase from Agrobacterium fabrum (strain C58 / ATCC 33970) (Agrobacterium tumefaciens (strain C58)).